The following is a 371-amino-acid chain: MALETFVNSEPFTFGVELEIQIVNTHNYDLTKAASDLMRLIKDAKFPGNITPEITESMIELSTGICRTHDQALGELHAIRDTLVSAADQLNVGLCGGGTHAFQQWSERQIFDAPRFQYISELYGYLAKQFTVFGQHVHIGCPDADSALFLLHSMSRFIPHFIALSASSPYVQNVDTGFHSARLNSVFAFPLSGRAPFVLTWHGFEEYFTKMVNTGVVNSMKDFYWDIRPKPGYGTIEVRVMDTPLSVDRAAAIACYIQTLARYLLIDRPLKLSEDDYLVYTFNRFEACRFGLEGTCVNPQTGERRTIAEDILDTLDRIAPHAAALGSRAALDEIGALAKARVNDASWLRTIFKQEKSLNETVRQQCLRWRE.

This sequence belongs to the glutamate--cysteine ligase type 2 family. YbdK subfamily.

The catalysed reaction is L-cysteine + L-glutamate + ATP = gamma-L-glutamyl-L-cysteine + ADP + phosphate + H(+). Its function is as follows. ATP-dependent carboxylate-amine ligase which exhibits weak glutamate--cysteine ligase activity. The chain is Putative glutamate--cysteine ligase 2 from Burkholderia mallei (strain NCTC 10247).